The chain runs to 447 residues: Methylenetetrahydrofolate--tRNA-(uracil-5-)-methyltransferase TrmFO (447 aa).

Residue 10-15 participates in FAD binding; it reads GAGLAG.

It belongs to the MnmG family. TrmFO subfamily. It depends on FAD as a cofactor.

Its subcellular location is the cytoplasm. The enzyme catalyses uridine(54) in tRNA + (6R)-5,10-methylene-5,6,7,8-tetrahydrofolate + NADH + H(+) = 5-methyluridine(54) in tRNA + (6S)-5,6,7,8-tetrahydrofolate + NAD(+). It catalyses the reaction uridine(54) in tRNA + (6R)-5,10-methylene-5,6,7,8-tetrahydrofolate + NADPH + H(+) = 5-methyluridine(54) in tRNA + (6S)-5,6,7,8-tetrahydrofolate + NADP(+). Catalyzes the folate-dependent formation of 5-methyl-uridine at position 54 (M-5-U54) in all tRNAs. This Lactococcus lactis subsp. lactis (strain IL1403) (Streptococcus lactis) protein is Methylenetetrahydrofolate--tRNA-(uracil-5-)-methyltransferase TrmFO.